A 102-amino-acid chain; its full sequence is Cytochrome c (102 aa).

G1 carries the N-acetylglycine modification. Positions 1–11 (GDAERGKKLFE) are enriched in basic and acidic residues. The interval 1–26 (GDAERGKKLFESRAGQCHSSQKGVNS) is disordered. 3 residues coordinate heme c: C17, H18, and M79. Residues 17 to 26 (CHSSQKGVNS) show a composition bias toward polar residues. K85 carries the N6,N6,N6-trimethyllysine modification.

This sequence belongs to the cytochrome c family. Binds 1 heme c group covalently per subunit.

Its subcellular location is the mitochondrion intermembrane space. Electron carrier protein. The oxidized form of the cytochrome c heme group can accept an electron from the heme group of the cytochrome c1 subunit of cytochrome reductase. Cytochrome c then transfers this electron to the cytochrome oxidase complex, the final protein carrier in the mitochondrial electron-transport chain. The polypeptide is Cytochrome c (Euglena viridis (Cercaria viridis)).